Here is a 541-residue protein sequence, read N- to C-terminus: Atlastin (541 aa).

The Cytoplasmic segment spans residues 1–424 (MGGSAVQVIN…NIFKAARTPA (424 aa)). The region spanning 35-284 (DRFVCVVSVA…LVPMLLAPDN (250 aa)) is the GB1/RHD3-type G domain. GDP-binding residues include arginine 48, lysine 49, glycine 50, lysine 51, and serine 52. Residues arginine 48, lysine 49, glycine 50, lysine 51, serine 52, and phenylalanine 53 each contribute to the GTP site. Mg(2+) is bound at residue serine 52. Residue aspartate 121 participates in Mg(2+) binding. Residues arginine 192, aspartate 193, and valine 251 each contribute to the GDP site. Residues arginine 192, aspartate 193, and valine 251 each coordinate GTP. The segment at 322–413 (MLVATAEANH…FTNYQAHNES (92 aa)) is 3HB (three-helix bundle) domain. A linker region spans residues 414–422 (KNIFKAART). Residues 425 to 445 (VYFACAVIMYILSGIFGLVGL) form a helical membrane-spanning segment. Residues 446–448 (YTF) lie on the Lumenal side of the membrane. The helical transmembrane segment at 449–469 (ANFCNLVMGVALLTLALWAYI) threads the bilayer. Residues 470 to 541 (RYSGELSDFG…NASNGKVKRS (72 aa)) lie on the Cytoplasmic side of the membrane. Residue threonine 514 is modified to Phosphothreonine.

The protein belongs to the TRAFAC class dynamin-like GTPase superfamily. GB1/RHD3 GTPase family. GB1 subfamily. Monomeric and homodimeric. The homodimer, transiently formed by two molecules on opposing membranes, is the active form mediating ER membrane fusion. Interacts with spas; interaction may regulate microtubule dynamics. Ubiquitously expressed.

The protein resides in the endoplasmic reticulum membrane. It localises to the golgi apparatus membrane. It carries out the reaction GTP + H2O = GDP + phosphate + H(+). In terms of biological role, membrane-anchored GTPase that mediates the GTP-dependent fusion of endoplasmic reticulum (ER) membranes, maintaining the continuous ER network. It facilitates the formation of three-way junctions where ER tubules intersect. Two atlastin-1 on neighboring ER tubules bind GTP and form loose homodimers through the GB1/RHD3-type G domains and 3HB regions. Upon GTP hydrolysis, the 3HB regions tighten, pulling the membranes together to drive their fusion. After fusion, the homodimer disassembles upon release of inorganic phosphate (Pi). Subsequently, GDP dissociates, resetting the monomers to a conformation ready for a new fusion cycle. May also regulate more or less directly Golgi biogenesis. May also regulate microtubule polymerization and Golgi biogenesis. Required for dopaminergic neurons survival and the growth of muscles and synapses at neuromuscular junctions. This chain is Atlastin (atl), found in Drosophila melanogaster (Fruit fly).